We begin with the raw amino-acid sequence, 368 residues long: Cell division protein FtsZ 1 (368 aa).

GTP is bound by residues 52 to 56 (GGGCN), 139 to 141 (GTG), E170, R174, and D217.

This sequence belongs to the FtsZ family. Homodimer. Polymerizes to form a dynamic ring structure in a strictly GTP-dependent manner. Interacts directly with several other division proteins.

The protein resides in the cytoplasm. In terms of biological role, essential cell division protein that forms a contractile ring structure (Z ring) at the future cell division site. The regulation of the ring assembly controls the timing and the location of cell division. One of the functions of the FtsZ ring is to recruit other cell division proteins to the septum to produce a new cell wall between the dividing cells. Binds GTP and shows GTPase activity. In Archaeoglobus fulgidus (strain ATCC 49558 / DSM 4304 / JCM 9628 / NBRC 100126 / VC-16), this protein is Cell division protein FtsZ 1.